We begin with the raw amino-acid sequence, 170 residues long: Protein SprT (170 aa).

The 144-residue stretch at 22–165 folds into the SprT-like domain; the sequence is LQLANQHLGT…RQCGEKLQFI (144 aa). H78 is a Zn(2+) binding site. Residue E79 is part of the active site. H82 is a binding site for Zn(2+).

The protein belongs to the SprT family. It depends on Zn(2+) as a cofactor.

Its subcellular location is the cytoplasm. This chain is Protein SprT, found in Yersinia pseudotuberculosis serotype O:1b (strain IP 31758).